A 234-amino-acid chain; its full sequence is Geranylgeranylglyceryl phosphate synthase (234 aa).

Residues aspartate 24 and serine 52 each coordinate Mg(2+). Sn-glycerol 1-phosphate-binding positions include 172-178 (YLEAGSG), 203-204 (GG), and 225-226 (GT).

Belongs to the GGGP/HepGP synthase family. Group II subfamily. In terms of assembly, homodimer. The cofactor is Mg(2+).

The enzyme catalyses sn-glycerol 1-phosphate + (2E,6E,10E)-geranylgeranyl diphosphate = sn-3-O-(geranylgeranyl)glycerol 1-phosphate + diphosphate. Prenyltransferase that catalyzes the transfer of the geranylgeranyl moiety of geranylgeranyl diphosphate (GGPP) to the C3 hydroxyl of sn-glycerol-1-phosphate (G1P). This Zunongwangia profunda (strain DSM 18752 / CCTCC AB 206139 / SM-A87) (Wangia profunda) protein is Geranylgeranylglyceryl phosphate synthase.